The following is a 231-amino-acid chain: Biosynthetic peptidoglycan transglycosylase (231 aa).

The helical transmembrane segment at 7–27 (LLFWLIVVPVLLVLLLQLYFF) threads the bilayer.

This sequence belongs to the glycosyltransferase 51 family.

Its subcellular location is the cell inner membrane. It catalyses the reaction [GlcNAc-(1-&gt;4)-Mur2Ac(oyl-L-Ala-gamma-D-Glu-L-Lys-D-Ala-D-Ala)](n)-di-trans,octa-cis-undecaprenyl diphosphate + beta-D-GlcNAc-(1-&gt;4)-Mur2Ac(oyl-L-Ala-gamma-D-Glu-L-Lys-D-Ala-D-Ala)-di-trans,octa-cis-undecaprenyl diphosphate = [GlcNAc-(1-&gt;4)-Mur2Ac(oyl-L-Ala-gamma-D-Glu-L-Lys-D-Ala-D-Ala)](n+1)-di-trans,octa-cis-undecaprenyl diphosphate + di-trans,octa-cis-undecaprenyl diphosphate + H(+). It participates in cell wall biogenesis; peptidoglycan biosynthesis. Functionally, peptidoglycan polymerase that catalyzes glycan chain elongation from lipid-linked precursors. The polypeptide is Biosynthetic peptidoglycan transglycosylase (Janthinobacterium sp. (strain Marseille) (Minibacterium massiliensis)).